A 240-amino-acid chain; its full sequence is Large ribosomal subunit protein uL2 (240 aa).

The interval 200–240 is disordered; that stretch reads HPFGGGGRQHPGKPKSISRNAPPGRKVGDIASKRTGRGGNE.

It belongs to the universal ribosomal protein uL2 family. As to quaternary structure, part of the 50S ribosomal subunit. Forms a bridge to the 30S subunit in the 70S ribosome. Interacts weakly with protein L37Ae.

One of the primary rRNA binding proteins. Required for association of the 30S and 50S subunits to form the 70S ribosome, for tRNA binding and peptide bond formation. It has been suggested to have peptidyltransferase activity; this is somewhat controversial. Makes several contacts with the 16S rRNA in the 70S ribosome. This Haloarcula marismortui (strain ATCC 43049 / DSM 3752 / JCM 8966 / VKM B-1809) (Halobacterium marismortui) protein is Large ribosomal subunit protein uL2 (rpl2).